Reading from the N-terminus, the 335-residue chain is Teichoic acids export ATP-binding protein TagH (335 aa).

The region spanning 26 to 246 is the ABC transporter domain; sequence IKGLFMPKSQ…YDEFVKWFNK (221 aa). 60-67 is a binding site for ATP; the sequence is GINGSGKS.

This sequence belongs to the ABC transporter superfamily. Teichoic acids exporter (TC 3.A.1.104.1) family. The complex is composed of two ATP-binding proteins (TagH) and two transmembrane proteins (TagG).

The protein localises to the cell membrane. The enzyme catalyses ATP + H2O + teichoic acidSide 1 = ADP + phosphate + teichoic acidSide 2.. Part of the ABC transporter complex TagGH involved in teichoic acids export. Responsible for energy coupling to the transport system. This is Teichoic acids export ATP-binding protein TagH from Listeria monocytogenes serotype 4b (strain F2365).